Consider the following 455-residue polypeptide: 1,4-beta-D-glucan cellobiohydrolase C (455 aa).

The first 19 residues, 1–19 (MHYSASGLALAFLLPAIQA), serve as a signal peptide directing secretion. A CBM1 domain is found at 20 to 55 (QQTLYGQCGGSGWTGATSCVAGAACSTLNQWYAQCL). Cystine bridges form between cysteine 27–cysteine 44 and cysteine 38–cysteine 54. Positions 59–92 (TTTSTTLTTTTSSVTTTSNPGSTTTTSSVTVTAT) are thr-rich linker. The tract at residues 66-86 (TTTTSSVTTTSNPGSTTTTSS) is disordered. The tract at residues 93–450 (ASGNPFSGYQ…QAYFVQLLQN (358 aa)) is catalytic. The active site involves aspartate 185. 2 cysteine pairs are disulfide-bonded: cysteine 186-cysteine 245 and cysteine 377-cysteine 424. The active-site Proton donor is aspartate 231. Aspartate 410 (nucleophile) is an active-site residue.

The protein belongs to the glycosyl hydrolase 6 (cellulase B) family.

It localises to the secreted. The enzyme catalyses Hydrolysis of (1-&gt;4)-beta-D-glucosidic linkages in cellulose and cellotetraose, releasing cellobiose from the non-reducing ends of the chains.. Functionally, the biological conversion of cellulose to glucose generally requires three types of hydrolytic enzymes: (1) Endoglucanases which cut internal beta-1,4-glucosidic bonds; (2) Exocellobiohydrolases that cut the disaccharide cellobiose from the non-reducing end of the cellulose polymer chain; (3) Beta-1,4-glucosidases which hydrolyze the cellobiose and other short cello-oligosaccharides to glucose. Active against carboxymethylcellulose, beta-glucan and lichenan. This chain is 1,4-beta-D-glucan cellobiohydrolase C (cbhC), found in Emericella nidulans (strain FGSC A4 / ATCC 38163 / CBS 112.46 / NRRL 194 / M139) (Aspergillus nidulans).